Consider the following 813-residue polypeptide: UPF0508 protein KLLA0A06237g (813 aa).

A disordered region spans residues 478–537 (KKDKSKSQKNSTDSLAKLSDTKSIHPPESAMSSHASTPSSTSKSSKSSKSSSTLSPSTCK). Low complexity predominate over residues 506 to 537 (SAMSSHASTPSSTSKSSKSSKSSSTLSPSTCK).

This sequence belongs to the UPF0508 family.

The polypeptide is UPF0508 protein KLLA0A06237g (Kluyveromyces lactis (strain ATCC 8585 / CBS 2359 / DSM 70799 / NBRC 1267 / NRRL Y-1140 / WM37) (Yeast)).